Consider the following 327-residue polypeptide: Phosphoenolpyruvate transferase (327 aa).

D59 provides a ligand contact to 7,8-didemethyl-8-hydroxy-5-deazariboflavin.

Belongs to the CofD family. As to quaternary structure, homodimer. The cofactor is Mg(2+).

The enzyme catalyses enolpyruvoyl-2-diphospho-5'-guanosine + 7,8-didemethyl-8-hydroxy-5-deazariboflavin = dehydro coenzyme F420-0 + GMP + H(+). It functions in the pathway cofactor biosynthesis; coenzyme F420 biosynthesis. Its function is as follows. Catalyzes the transfer of the phosphoenolpyruvate moiety from enoylpyruvoyl-2-diphospho-5'-guanosine (EPPG) to 7,8-didemethyl-8-hydroxy-5-deazariboflavin (FO) with the formation of dehydro coenzyme F420-0 and GMP. The sequence is that of Phosphoenolpyruvate transferase from Mycolicibacterium smegmatis (strain ATCC 700084 / mc(2)155) (Mycobacterium smegmatis).